Here is a 105-residue protein sequence, read N- to C-terminus: Pyrimidine/purine nucleoside phosphorylase (105 aa).

This sequence belongs to the nucleoside phosphorylase PpnP family.

The enzyme catalyses a purine D-ribonucleoside + phosphate = a purine nucleobase + alpha-D-ribose 1-phosphate. The catalysed reaction is adenosine + phosphate = alpha-D-ribose 1-phosphate + adenine. It carries out the reaction cytidine + phosphate = cytosine + alpha-D-ribose 1-phosphate. It catalyses the reaction guanosine + phosphate = alpha-D-ribose 1-phosphate + guanine. The enzyme catalyses inosine + phosphate = alpha-D-ribose 1-phosphate + hypoxanthine. The catalysed reaction is thymidine + phosphate = 2-deoxy-alpha-D-ribose 1-phosphate + thymine. It carries out the reaction uridine + phosphate = alpha-D-ribose 1-phosphate + uracil. It catalyses the reaction xanthosine + phosphate = alpha-D-ribose 1-phosphate + xanthine. Catalyzes the phosphorolysis of diverse nucleosides, yielding D-ribose 1-phosphate and the respective free bases. Can use uridine, adenosine, guanosine, cytidine, thymidine, inosine and xanthosine as substrates. Also catalyzes the reverse reactions. This Wolinella succinogenes (strain ATCC 29543 / DSM 1740 / CCUG 13145 / JCM 31913 / LMG 7466 / NCTC 11488 / FDC 602W) (Vibrio succinogenes) protein is Pyrimidine/purine nucleoside phosphorylase.